The sequence spans 43 residues: METATFVAIFISCLLISFTGYALYTAFGQPSNELRDPFEEHED.

The chain crosses the membrane as a helical span at residues 4-24 (ATFVAIFISCLLISFTGYALY).

This sequence belongs to the PsbN family.

Its subcellular location is the plastid. The protein localises to the chloroplast thylakoid membrane. In terms of biological role, may play a role in photosystem I and II biogenesis. The sequence is that of Protein PsbN from Marchantia polymorpha (Common liverwort).